A 624-amino-acid chain; its full sequence is Exocyst complex component EXO70B1 (624 aa).

Residues 148-176 (FGLNPQGDAGAMNHRFDSEEEEDDDRDFN) form a disordered region.

This sequence belongs to the EXO70 family. As to quaternary structure, interacts with EXO70B2, SEC5A and EXO84B. Binds to PUB18. Binds directly to B1L at the plasma membrane and in small vesicles. Target of the E3 ubiquitin-protein ligase PUB18 that mediates its ubiquitination and degradation via the 26S proteasome.

It localises to the cytoplasmic vesicle. It is found in the phagosome. The protein localises to the endomembrane system. The protein resides in the cell membrane. Its subcellular location is the vesicle. Its function is as follows. Component of an exocyst subcomplex specifically involved in autophagy-related, Golgi-independent membrane traffic to the vacuole. Regulates autophagosome formation and autophagy-related Golgi-independent import into the vacuole. Positive regulator of both abscisic acid (ABA)-promoted and mannitol (drought)-promoted stomatal closure. Involved in the regulation of lateral root formation. The polypeptide is Exocyst complex component EXO70B1 (Arabidopsis thaliana (Mouse-ear cress)).